A 276-amino-acid polypeptide reads, in one-letter code: Putative pyridoxine kinase (276 aa).

Asn139 is a binding site for ATP. Glu142 provides a ligand contact to Mg(2+). Residues 176-180, Asp188, Gly213, and Lys238 contribute to the ATP site; that span reads KGGKA.

It belongs to the ThiD family.

The enzyme catalyses pyridoxal + ATP = pyridoxal 5'-phosphate + ADP + H(+). Phosphorylates B6 vitamers; functions in a salvage pathway. Uses pyridoxal, pyridoxine, and pyridoxamine as substrates. The sequence is that of Putative pyridoxine kinase (pdxK) from Staphylococcus epidermidis (strain ATCC 35984 / DSM 28319 / BCRC 17069 / CCUG 31568 / BM 3577 / RP62A).